Consider the following 540-residue polypeptide: Zinc finger protein 768 (540 aa).

Disordered regions lie at residues 1–166 (MERE…FEAQ) and 239–258 (TGALRGPGRRGGRARGGQGP). Residues Ser-17, Ser-18, and Ser-23 each carry the phosphoserine modification. Position 27 is a phosphotyrosine (Tyr-27). A Phosphoserine modification is found at Ser-33. The span at 34–53 (ENEEEEISQQEGSGDYEVEE) shows a compositional bias: acidic residues. 11 positions are modified to phosphoserine: Ser-62, Ser-69, Ser-76, Ser-83, Ser-90, Ser-97, Ser-104, Ser-107, Ser-111, Ser-118, and Ser-125. Positions 62–77 (SPGFEPQSPEFEPQSP) are enriched in low complexity. Residues 107–119 (SDSQSPEFESQSP) are compositionally biased toward polar residues. Tyr-128 carries the phosphotyrosine modification. The residue at position 132 (Ser-132) is a Phosphoserine. Tyr-135 is modified (phosphotyrosine). Phosphoserine is present on Ser-139. Tyr-142 is modified (phosphotyrosine). Phosphoserine occurs at positions 144 and 147. Polar residues predominate over residues 149-166 (YESQNTELKTQSPEFEAQ). At Thr-158 the chain carries Phosphothreonine. Residue Ser-160 is modified to Phosphoserine. The C2H2-type 1 zinc finger occupies 261 to 283 (NICGICGKSFGRGSTLIQHQRIH). Residue Thr-284 is modified to Phosphothreonine. Tyr-289 is subject to Phosphotyrosine. C2H2-type zinc fingers lie at residues 289 to 311 (YKCEVCSKAFSQSSDLIKHQRTH), 317 to 339 (YKCPRCGKAFADSSYLLRHQRTH), 345 to 367 (YKCPHCGKAFGDSSYLLRHQRTH), and 373 to 395 (YSCTECGKCYSQNSSLRSHQRVH). Ser-295 and Ser-299 each carry phosphoserine. Thr-396 carries the phosphothreonine modification. 5 consecutive C2H2-type zinc fingers follow at residues 401-423 (FSCGICGKSFSQRSALIPHARSH), 429-451 (FKCPECGKRFGQSSVLAIHARTH), 457-479 (YSCPDCGKTFNRSSTLIQHQRSH), 485-507 (YRCAVCGKGFCRSSTLLQHHRVH), and 513-535 (YKCDDCGKAFSQSSDLIRHQRTH). Phosphoserine is present on Ser-442.

Belongs to the krueppel C2H2-type zinc-finger protein family. In terms of assembly, interacts (via zinc-finger domains) with TP53 (via N-terminus); interaction might be facilitated by TP53 oligomerization state. Interacts with ELP3. Post-translationally, may be phosphorylated at residue 'Ser-5' of the tandem heptapeptide repeats in the N-terminus. Phosphorylation might be increased upon RAS pathway activation and negatively regulate protein stability.

It localises to the nucleus. The protein localises to the chromosome. Binds to mammalian-wide interspersed repeat (MIRs) sequences in euchromatin and promoter regions of genes at the consensus sequence 5'-GCTGTGTG-[N20]-CCTCTCTG-3', consisting of two anchor regions connected by a linker region; the linker region probably does not contribute to the binding specificity. Required for cell homeostasis. May be involved in transcriptional regulation. In Homo sapiens (Human), this protein is Zinc finger protein 768 (ZNF768).